Here is a 511-residue protein sequence, read N- to C-terminus: DELLA protein RGL1 (511 aa).

The segment covering 1–11 (MKREHNHRESS) has biased composition (basic and acidic residues). Positions 1 to 20 (MKREHNHRESSAGEGGSSSM) are disordered. Residues 32-36 (DELLV) carry the DELLA motif motif. Positions 54–58 (LEQLE) match the LEXLE motif motif. The VHYNP motif signature appears at 73–77 (VHYNP). The region spanning 143–506 (LDSQETGVRL…RPLIATSAWR (364 aa)) is the GRAS domain. The leucine repeat I (LRI) stretch occupies residues 150-204 (VRLVHALLACAEAVQQNNLKLADALVKHVGLLASSQAGAMRKVATYFAEGLARRI). Positions 157 to 161 (LACAE) match the LxCxE motif motif. The tract at residues 223-288 (QIHFYESCPY…NGPPDFRLTG (66 aa)) is VHIID. The VHIID motif lies at 254–258 (VHVID). Residues 298–330 (EVGWKLGQLASTIGVNFEFKSIALNNLSDLKPE) are leucine repeat II (LRII). The interval 341–427 (VAVNSVFELH…ELFLGRQILN (87 aa)) is PFYRE. Residues 349-353 (LHRLL) carry the LXXLL motif motif. Residues 430–506 (ACEGEDRVER…RPLIATSAWR (77 aa)) form an SAW region.

Belongs to the GRAS family. DELLA subfamily. In terms of assembly, interacts directly with the GID2/SLY1 component of the SCF(GID2) complex. Interacts (via N-terminus) with GID1A, GID1B and GID1B (via N-terminus). Interacts with the BOI proteins BOI, BRG1, BRG2 and BRG3. Binds to and coactivates GAF1/IDD2 and ENY/IDD1. In terms of processing, phosphorylated. Post-translationally, may be ubiquitinated, as suggested by its interaction with GID2. Ubiquitination is however unsure since in contrast to other DELLA proteins, it is not ubiquitinated and degraded upon GA application. Nevertheless, ubiquitination may be triggered by other processes. As to expression, predominantly expressed in germinating seeds and flowers and siliques. Highly expressed in inflorescences and weakly or not expressed in rosette leaves, etiolated seedlings, siliques, mature stems and roots. RGA and GAI transcripts were detected at slightly varying levels in all tissues examined. RGL2 signal was undetected, and RGL3 signal was very weak in all tissues examined (rosette leaves, seedlings, inflorescences, and siliques) except inflorescences. In the flower, it is expressed in developing ovules as well as in developing anthers throughout microspore development.

The protein localises to the nucleus. Its function is as follows. Probable transcriptional regulator that acts as a repressor of the gibberellin (GA) signaling pathway. No effect of the BOI proteins on its stability. Probably acts by participating in large multiprotein complexes that repress transcription of GA-inducible genes. Has overlapping but distinct roles in GA signaling compared to RGA and GAI. Regulates the floral development. May also participate in seed germination and in ovule and anther development. Its activity is probably regulated by other phytohormones such as auxin and ethylene. In Arabidopsis thaliana (Mouse-ear cress), this protein is DELLA protein RGL1 (RGL1).